A 761-amino-acid polypeptide reads, in one-letter code: Copper-exporting P-type ATPase (761 aa).

The residue at position 2 (T2) is an N-acetylthreonine. Positions 14-78 (QRIQLRISGM…AVRRAGYQAD (65 aa)) constitute an HMA domain. 2 residues coordinate Cu(+): C25 and C28. The next 6 membrane-spanning stretches (helical) occupy residues 102–122 (LAIA…FGVV), 129–149 (GWQW…AWPF), 164–184 (METL…YTVF), 199–219 (LLGS…FVLV), 361–381 (VFVP…LIAG), and 387–407 (AVSA…GLAT). The active-site 4-aspartylphosphate intermediate is D443. The next 2 helical transmembrane spans lie at 695 to 714 (MVWA…AGLL) and 718 to 735 (VAGA…SNSL).

This sequence belongs to the cation transport ATPase (P-type) (TC 3.A.3) family. Type IB subfamily.

The protein resides in the cell membrane. It catalyses the reaction Cu(+)(in) + ATP + H2O = Cu(+)(out) + ADP + phosphate + H(+). With respect to regulation, ATPase activity is stimulated by Cu(+) ions. Involved in copper export. Could be involved in the copper detoxification of mycobacterial cells. The chain is Copper-exporting P-type ATPase (ctpA) from Mycobacterium tuberculosis (strain ATCC 25618 / H37Rv).